The primary structure comprises 168 residues: Endoribonuclease YbeY (168 aa).

His-132, His-136, and His-142 together coordinate Zn(2+).

It belongs to the endoribonuclease YbeY family. Zn(2+) is required as a cofactor.

The protein resides in the cytoplasm. Its function is as follows. Single strand-specific metallo-endoribonuclease involved in late-stage 70S ribosome quality control and in maturation of the 3' terminus of the 16S rRNA. This chain is Endoribonuclease YbeY, found in Clostridium perfringens (strain SM101 / Type A).